The chain runs to 87 residues: MDKAKKQELMAKHARHEGDTGSPEVQIALLTERINHLNSHLKEHKKDHHSRRGLLMMVGKRRGLLNYLMREDIERYRAIIKELGLRK.

A compositionally biased stretch (basic and acidic residues) spans 1 to 19; the sequence is MDKAKKQELMAKHARHEGD. A disordered region spans residues 1-23; it reads MDKAKKQELMAKHARHEGDTGSP.

The protein belongs to the universal ribosomal protein uS15 family. In terms of assembly, part of the 30S ribosomal subunit. Forms a bridge to the 50S subunit in the 70S ribosome, contacting the 23S rRNA.

Its function is as follows. One of the primary rRNA binding proteins, it binds directly to 16S rRNA where it helps nucleate assembly of the platform of the 30S subunit by binding and bridging several RNA helices of the 16S rRNA. Forms an intersubunit bridge (bridge B4) with the 23S rRNA of the 50S subunit in the ribosome. This chain is Small ribosomal subunit protein uS15, found in Clostridium botulinum (strain Loch Maree / Type A3).